A 629-amino-acid chain; its full sequence is Flap endonuclease GEN-like 1 (629 aa).

The N-domain stretch occupies residues Met1–Gln87. The interval Gly2–Gly98 is XPG-N domain. Asp31, Asp78, Glu148, Glu150, Asp169, Asp171, and Asp221 together coordinate Mg(2+). The XPG-I domain stretch occupies residues Glu136–Asp221. Positions Glu136–His225 are I-domain. The interval Asp221–Leu421 is 5'-3' exonuclease domain. The disordered stretch occupies residues Lys594–Asn617. The segment covering Ser601 to Leu614 has biased composition (basic and acidic residues).

It belongs to the XPG/RAD2 endonuclease family. GEN subfamily. Monomer. Interacts with PCNA. PCNA stimulates the nuclease activity without altering cleavage specificity. Mg(2+) serves as cofactor. Highly expressed in anthers. Expressed in roots and leaves.

Its subcellular location is the nucleus. Its function is as follows. Endonuclease which cleaves flap structures at the junction between single-stranded DNA and double-stranded DNA. Possesses both single-stranded and double-stranded DNA-binding activities. Involved in early microspore development, but does not alter meiosis or tapetal cells development. Possesses Holliday junction (HJ) resolvase activity in vitro. Cleaves HJ at symmetrically related sites of the branch point. The protein is Flap endonuclease GEN-like 1 of Oryza sativa subsp. japonica (Rice).